A 212-amino-acid chain; its full sequence is Ribonuclease P protein component 3 (212 aa).

It belongs to the eukaryotic/archaeal RNase P protein component 3 family. As to quaternary structure, consists of a catalytic RNA component and at least 5 protein subunits. Forms a heterotetrameric subcomplex with Rnp2. Reconstituted enzyme missing individual protein subunits is suboptimally active, showing each subunit contributes to optimization of activity.

Its subcellular location is the cytoplasm. The catalysed reaction is Endonucleolytic cleavage of RNA, removing 5'-extranucleotides from tRNA precursor.. In terms of biological role, part of ribonuclease P, a protein complex that generates mature tRNA molecules by cleaving their 5'-ends. Not absolutely essential for activity in vitro, however it strongly stimulates activity. Binds RNase P RNA. The chain is Ribonuclease P protein component 3 from Pyrococcus horikoshii (strain ATCC 700860 / DSM 12428 / JCM 9974 / NBRC 100139 / OT-3).